Consider the following 329-residue polypeptide: Zygote arrest protein 1 (329 aa).

2 disordered regions span residues 106–132 and 146–218; these read LRRR…RTQA and FREE…DDLK. Acidic residues predominate over residues 149 to 162; sequence EGEEEEDTDLEVTE. The segment covering 166-177 has biased composition (basic and acidic residues); the sequence is SAEKLESAEKNV. The 3CxxC-type zinc-finger motif lies at 231 to 314; the sequence is KYGFYHCKDC…RQDLCGRCKG (84 aa).

It belongs to the ZAR1 family. Specifically expressed in ovaries but absent in testes.

The protein resides in the cytoplasm. It is found in the cytoplasmic ribonucleoprotein granule. Its function is as follows. mRNA-binding protein required for maternal mRNA storage, translation and degradation during oocyte maturation. Probably promotes formation of some phase-separated membraneless compartment that stores maternal mRNAs in oocytes: acts by undergoing liquid-liquid phase separation upon binding to maternal mRNAs. Binds to the 3'-UTR of zona pellucida mRNAs, inhibiting their translation. The polypeptide is Zygote arrest protein 1 (Danio rerio (Zebrafish)).